Here is a 197-residue protein sequence, read N- to C-terminus: Imidazoleglycerol-phosphate dehydratase (197 aa).

Belongs to the imidazoleglycerol-phosphate dehydratase family.

It is found in the cytoplasm. It carries out the reaction D-erythro-1-(imidazol-4-yl)glycerol 3-phosphate = 3-(imidazol-4-yl)-2-oxopropyl phosphate + H2O. Its pathway is amino-acid biosynthesis; L-histidine biosynthesis; L-histidine from 5-phospho-alpha-D-ribose 1-diphosphate: step 6/9. The protein is Imidazoleglycerol-phosphate dehydratase of Nitrobacter hamburgensis (strain DSM 10229 / NCIMB 13809 / X14).